Consider the following 391-residue polypeptide: Arsenite methyltransferase (391 aa).

The interval 1–126 (MELWTHPTPA…TMVADRDPEE (126 aa)) is disordered. Residues 28–39 (CSQPWATTPGTN) are compositionally biased toward polar residues. Low complexity predominate over residues 40 to 65 (SSDASRTPTTASASATSKPQSASARA). Polar residues predominate over residues 102-116 (KRSTTCEATMSNDNE).

Belongs to the methyltransferase superfamily. Arsenite methyltransferase family.

The catalysed reaction is arsenic triglutathione + [thioredoxin]-dithiol + S-adenosyl-L-methionine + 2 H2O = methylarsonous acid + [thioredoxin]-disulfide + 3 glutathione + S-adenosyl-L-homocysteine + H(+). The enzyme catalyses arsenic triglutathione + 2 [thioredoxin]-dithiol + 2 S-adenosyl-L-methionine + H2O = dimethylarsinous acid + 2 [thioredoxin]-disulfide + 3 glutathione + 2 S-adenosyl-L-homocysteine + 2 H(+). It catalyses the reaction arsenic triglutathione + 3 [thioredoxin]-dithiol + 3 S-adenosyl-L-methionine = trimethylarsine + 3 [thioredoxin]-disulfide + 3 glutathione + 3 S-adenosyl-L-homocysteine + 3 H(+). Catalyzes the transfer of a methyl group from AdoMet to arsenite, producing methylated arsenicals. The sequence is that of Arsenite methyltransferase from Halobacterium salinarum (strain ATCC 700922 / JCM 11081 / NRC-1) (Halobacterium halobium).